Here is a 129-residue protein sequence, read N- to C-terminus: Lysozyme C, milk isozyme (129 aa).

The 129-residue stretch at 1-129 (KVFSKCELAH…LSEYLASCNL (129 aa)) folds into the C-type lysozyme domain. Disulfide bonds link C6-C127, C30-C115, C65-C80, and C76-C94. Residues E35 and D53 contribute to the active site. Ca(2+) contacts are provided by K82, D85, N87, D90, and D91.

This sequence belongs to the glycosyl hydrolase 22 family. As to quaternary structure, monomer. Ca(2+) serves as cofactor.

It catalyses the reaction Hydrolysis of (1-&gt;4)-beta-linkages between N-acetylmuramic acid and N-acetyl-D-glucosamine residues in a peptidoglycan and between N-acetyl-D-glucosamine residues in chitodextrins.. Functionally, lysozymes have primarily a bacteriolytic function; those in tissues and body fluids are associated with the monocyte-macrophage system and enhance the activity of immunoagents. In Equus caballus (Horse), this protein is Lysozyme C, milk isozyme (LYZ).